Here is a 428-residue protein sequence, read N- to C-terminus: Adenylosuccinate synthetase (428 aa).

Residues 12–18 and 40–42 contribute to the GTP site; these read GDEGKGK and GHS. The active-site Proton acceptor is aspartate 13. Residues aspartate 13 and glycine 40 each coordinate Mg(2+). IMP is bound by residues 13–16, 38–41, threonine 128, arginine 142, glutamine 223, threonine 238, and arginine 302; these read DEGK and NAGH. The active-site Proton donor is histidine 41. Residue 298-304 coordinates substrate; it reads VTTGRPR. Residues arginine 304, 330–332, and 412–414 contribute to the GTP site; these read KLD and GTG.

The protein belongs to the adenylosuccinate synthetase family. Homodimer. Mg(2+) serves as cofactor.

The protein resides in the cytoplasm. It catalyses the reaction IMP + L-aspartate + GTP = N(6)-(1,2-dicarboxyethyl)-AMP + GDP + phosphate + 2 H(+). Its pathway is purine metabolism; AMP biosynthesis via de novo pathway; AMP from IMP: step 1/2. Functionally, plays an important role in the de novo pathway of purine nucleotide biosynthesis. Catalyzes the first committed step in the biosynthesis of AMP from IMP. The sequence is that of Adenylosuccinate synthetase from Bifidobacterium longum subsp. infantis (strain ATCC 15697 / DSM 20088 / JCM 1222 / NCTC 11817 / S12).